A 1057-amino-acid chain; its full sequence is Carbamoyl phosphate synthase large chain (1057 aa).

A carboxyphosphate synthetic domain region spans residues 1-401 (MPKRDDIQTI…SLLKAIRSLE (401 aa)). Residues Arg-129, Arg-169, Gly-175, Gly-176, Lys-208, Ile-210, Glu-215, Gly-241, Ile-242, His-243, Gln-284, and Glu-298 each coordinate ATP. The 195-residue stretch at 133-327 (RTLMNDLNVP…IAKLAAKIAV (195 aa)) folds into the ATP-grasp 1 domain. Residues Gln-284, Glu-298, and Asn-300 each contribute to the Mg(2+) site. Mn(2+) is bound by residues Gln-284, Glu-298, and Asn-300. Residues 402–546 (YGVHHLGLPN…YGTYEDENES (145 aa)) form an oligomerization domain region. The segment at 547 to 929 (IVTDKEKILV…ALYKGLTGSG (383 aa)) is carbamoyl phosphate synthetic domain. The region spanning 671–861 (EALLREISVP…MAQLAMRAIM (191 aa)) is the ATP-grasp 2 domain. Residues Arg-707, Arg-746, Leu-748, Glu-752, Gly-777, Val-778, His-779, Ser-780, Gln-820, and Glu-832 each coordinate ATP. The Mg(2+) site is built by Gln-820, Glu-832, and Asn-834. Positions 820, 832, and 834 each coordinate Mn(2+). An MGS-like domain is found at 930–1057 (FEVKDHGTVL…ESMTFTMRNV (128 aa)). The tract at residues 930 to 1057 (FEVKDHGTVL…ESMTFTMRNV (128 aa)) is allosteric domain.

It belongs to the CarB family. Composed of two chains; the small (or glutamine) chain promotes the hydrolysis of glutamine to ammonia, which is used by the large (or ammonia) chain to synthesize carbamoyl phosphate. Tetramer of heterodimers (alpha,beta)4. Requires Mg(2+) as cofactor. Mn(2+) is required as a cofactor.

The catalysed reaction is hydrogencarbonate + L-glutamine + 2 ATP + H2O = carbamoyl phosphate + L-glutamate + 2 ADP + phosphate + 2 H(+). It carries out the reaction hydrogencarbonate + NH4(+) + 2 ATP = carbamoyl phosphate + 2 ADP + phosphate + 2 H(+). It functions in the pathway amino-acid biosynthesis; L-arginine biosynthesis; carbamoyl phosphate from bicarbonate: step 1/1. The protein operates within pyrimidine metabolism; UMP biosynthesis via de novo pathway; (S)-dihydroorotate from bicarbonate: step 1/3. In terms of biological role, large subunit of the glutamine-dependent carbamoyl phosphate synthetase (CPSase). CPSase catalyzes the formation of carbamoyl phosphate from the ammonia moiety of glutamine, carbonate, and phosphate donated by ATP, constituting the first step of 2 biosynthetic pathways, one leading to arginine and/or urea and the other to pyrimidine nucleotides. The large subunit (synthetase) binds the substrates ammonia (free or transferred from glutamine from the small subunit), hydrogencarbonate and ATP and carries out an ATP-coupled ligase reaction, activating hydrogencarbonate by forming carboxy phosphate which reacts with ammonia to form carbamoyl phosphate. This Staphylococcus epidermidis (strain ATCC 35984 / DSM 28319 / BCRC 17069 / CCUG 31568 / BM 3577 / RP62A) protein is Carbamoyl phosphate synthase large chain.